A 571-amino-acid polypeptide reads, in one-letter code: Chondroitin sulfate proteoglycan 5 (571 aa).

An N-terminal signal peptide occupies residues 1–30 (MGRAGGGGPGWGPPPVLLLLGVTLVLTAGA). Residues 31–428 (VPAREAGSAI…SIITDFQVMC (398 aa)) lie on the Extracellular side of the membrane. The O-linked (Xyl...) (chondroitin sulfate) serine glycan is linked to Ser38. Asn57 is a glycosylation site (N-linked (GlcNAc...) asparagine). Residues 57–91 (NDTREEAGLPAAGEDETSWTERGSELAAVGPGVGP) are disordered. A glycan (O-linked (GalNAc...) threonine) is linked at Thr76. A glycan (O-linked (Xyl...) (chondroitin sulfate) serine) is linked at Ser123. An O-linked (GalNAc...) threonine glycan is attached at Thr132. Disordered stretches follow at residues 137–169 (DEAL…KPSL), 186–254 (GGST…TPSW), and 279–357 (DDLE…DLAT). An O-linked (GalNAc...) serine glycan is attached at Ser143. O-linked (GalNAc...) threonine glycosylation is found at Thr144 and Thr153. O-linked (GalNAc...) serine glycans are attached at residues Ser156 and Ser160. O-linked (GalNAc...) threonine glycosylation is found at Thr162 and Thr198. Residues 214-223 (IDIDYFEGLD) show a composition bias toward acidic residues. O-linked (GalNAc...) threonine glycosylation is present at Thr240. The interaction with TNC and TNR stretch occupies residues 270 to 306 (DFYPTTSFYDDLEEEEEEEEDKDAVGGGDLEDESDLL). Residues 279 to 291 (DDLEEEEEEEEDK) show a composition bias toward acidic residues. Thr318 and Thr322 each carry an O-linked (GalNAc...) threonine glycan. Residue Asn372 is glycosylated (N-linked (GlcNAc...) asparagine). Residues 376 to 418 (RSVCDLFPSYCHNGGQCYLVENIGAFCRCNTQDYIWHKGMRCE) enclose the EGF-like domain. 3 disulfides stabilise this stretch: Cys379/Cys392, Cys386/Cys402, and Cys404/Cys417. Residues 429 to 449 (VAVGSAALVLLLLFMMTVFFA) traverse the membrane as a helical segment. The segment at 447–465 (FFAKKLYLLKTENTKLRRT) is interaction with GOPC. Topologically, residues 450-571 (KKLYLLKTEN…EVNCLQNNLT (122 aa)) are cytoplasmic. Residues Ser472, Ser480, Ser488, and Ser548 each carry the phosphoserine modification. Residues 538–563 (EESFNIQNSMSPKLEGGKGDQDDLEV) form a disordered region.

In terms of assembly, interacts with ERBB3 and GOPC. Binds TNR and probably TNC. Interacts with MDK; this interaction is independent of the presence of chondroitin sulfate chains and promotes elongation of oligodendroglial precursor-like cells. Post-translationally, N-glycosylated. O-glycosylated; contains chondroitin sulfate glycans. Part-time proteoglycan, expressed in part as a proteoglycan exhibiting chondroitin sulfate glycans and in part as a non-proteoglycan form. The relative amount of both forms depends on tissues and tissue maturation. In terms of processing, phosphorylated; in intracellular and extracellular parts. Expressed in cerebral cortex and cerebellum. Expressed in retina (at protein level).

The protein resides in the cell membrane. Its subcellular location is the synaptic cell membrane. It is found in the endoplasmic reticulum membrane. The protein localises to the golgi apparatus membrane. It localises to the cell surface. The protein resides in the secreted. May function as a growth and differentiation factor involved in neuritogenesis. May induce ERBB3 activation. The chain is Chondroitin sulfate proteoglycan 5 (Cspg5) from Rattus norvegicus (Rat).